The chain runs to 353 residues: Biotin synthase (353 aa).

One can recognise a Radical SAM core domain in the interval 51 to 270; it reads NEVQCNQLLN…IALARIMMPK (220 aa). C66, C70, and C73 together coordinate [4Fe-4S] cluster. Positions 110, 141, 201, and 274 each coordinate [2Fe-2S] cluster. The interval 330–353 is disordered; it reads APVEAHSHDHDHDHHDHHHGHSHS. Residues 334–343 are compositionally biased toward basic and acidic residues; it reads AHSHDHDHDH. Basic residues predominate over residues 344–353; the sequence is HDHHHGHSHS.

Belongs to the radical SAM superfamily. Biotin synthase family. In terms of assembly, homodimer. [4Fe-4S] cluster is required as a cofactor. Requires [2Fe-2S] cluster as cofactor.

The enzyme catalyses (4R,5S)-dethiobiotin + (sulfur carrier)-SH + 2 reduced [2Fe-2S]-[ferredoxin] + 2 S-adenosyl-L-methionine = (sulfur carrier)-H + biotin + 2 5'-deoxyadenosine + 2 L-methionine + 2 oxidized [2Fe-2S]-[ferredoxin]. Its pathway is cofactor biosynthesis; biotin biosynthesis; biotin from 7,8-diaminononanoate: step 2/2. Functionally, catalyzes the conversion of dethiobiotin (DTB) to biotin by the insertion of a sulfur atom into dethiobiotin via a radical-based mechanism. The sequence is that of Biotin synthase from Rhodopseudomonas palustris (strain HaA2).